The primary structure comprises 95 residues: MSYTIQAQTRTEIGKGSSRRLRHAGKVPAVIYGQGKEPVSIVFDHKDIINIQANADFYTSTLTIVVDGKEVGVRAQAMQRHVFKPLIEHVDFVYA.

It belongs to the bacterial ribosomal protein bL25 family. As to quaternary structure, part of the 50S ribosomal subunit; part of the 5S rRNA/L5/L18/L25 subcomplex. Contacts the 5S rRNA. Binds to the 5S rRNA independently of L5 and L18.

Functionally, this is one of the proteins that binds to the 5S RNA in the ribosome where it forms part of the central protuberance. The protein is Large ribosomal subunit protein bL25 of Shewanella baltica (strain OS223).